Here is a 186-residue protein sequence, read N- to C-terminus: Ribosome-recycling factor (186 aa).

The disordered stretch occupies residues 135-156 (DANDEVKKLQKDKAVSEDEGKK).

It belongs to the RRF family.

Its subcellular location is the cytoplasm. In terms of biological role, responsible for the release of ribosomes from messenger RNA at the termination of protein biosynthesis. May increase the efficiency of translation by recycling ribosomes from one round of translation to another. This chain is Ribosome-recycling factor, found in Bdellovibrio bacteriovorus (strain ATCC 15356 / DSM 50701 / NCIMB 9529 / HD100).